The chain runs to 223 residues: Thiamine-phosphate synthase (223 aa).

Residues 37–41 (QFREK) and Asp72 each bind 4-amino-2-methyl-5-(diphosphooxymethyl)pyrimidine. Residues Asp73 and Asp92 each contribute to the Mg(2+) site. Ser110 lines the 4-amino-2-methyl-5-(diphosphooxymethyl)pyrimidine pocket. 136 to 138 (TQS) provides a ligand contact to 2-[(2R,5Z)-2-carboxy-4-methylthiazol-5(2H)-ylidene]ethyl phosphate. Residue Lys139 participates in 4-amino-2-methyl-5-(diphosphooxymethyl)pyrimidine binding. 2-[(2R,5Z)-2-carboxy-4-methylthiazol-5(2H)-ylidene]ethyl phosphate is bound by residues Gly168 and 188–189 (IS).

This sequence belongs to the thiamine-phosphate synthase family. Requires Mg(2+) as cofactor.

The catalysed reaction is 2-[(2R,5Z)-2-carboxy-4-methylthiazol-5(2H)-ylidene]ethyl phosphate + 4-amino-2-methyl-5-(diphosphooxymethyl)pyrimidine + 2 H(+) = thiamine phosphate + CO2 + diphosphate. The enzyme catalyses 2-(2-carboxy-4-methylthiazol-5-yl)ethyl phosphate + 4-amino-2-methyl-5-(diphosphooxymethyl)pyrimidine + 2 H(+) = thiamine phosphate + CO2 + diphosphate. It catalyses the reaction 4-methyl-5-(2-phosphooxyethyl)-thiazole + 4-amino-2-methyl-5-(diphosphooxymethyl)pyrimidine + H(+) = thiamine phosphate + diphosphate. It participates in cofactor biosynthesis; thiamine diphosphate biosynthesis; thiamine phosphate from 4-amino-2-methyl-5-diphosphomethylpyrimidine and 4-methyl-5-(2-phosphoethyl)-thiazole: step 1/1. Its function is as follows. Condenses 4-methyl-5-(beta-hydroxyethyl)thiazole monophosphate (THZ-P) and 2-methyl-4-amino-5-hydroxymethyl pyrimidine pyrophosphate (HMP-PP) to form thiamine monophosphate (TMP). The polypeptide is Thiamine-phosphate synthase (Streptococcus agalactiae serotype Ia (strain ATCC 27591 / A909 / CDC SS700)).